A 307-amino-acid polypeptide reads, in one-letter code: MLQRTLAKSISVTGVGLHSGERVALTLHPAPENSGISFRRTDLDGEMGEQIKLTPYLINDTRLSSTIVTDKGVRVGTIEHIMSALSAYGIDNALIELNAPEIPIMDGSSLPFIYLLQDAGVVDQKAQKRFLKILKPVEIKEAGKWVRFTPYDGFKVTLTIEFDHPVFNRSSPTFEIDFAGKSYIDEIARARTFGFMHEVEMMRAHNLGLGGNLNNAIVIDDTDVLNPEGLRYPDEFVRHKILDAIGDLYIVGHPIVGAFEGYKSGHAINNALLRAVLADETAYDRVEFADSDDLPDAFHELNIRTCG.

Zn(2+) is bound by residues H80, H239, and D243. H266 (proton donor) is an active-site residue.

This sequence belongs to the LpxC family. The cofactor is Zn(2+).

It carries out the reaction a UDP-3-O-[(3R)-3-hydroxyacyl]-N-acetyl-alpha-D-glucosamine + H2O = a UDP-3-O-[(3R)-3-hydroxyacyl]-alpha-D-glucosamine + acetate. It functions in the pathway glycolipid biosynthesis; lipid IV(A) biosynthesis; lipid IV(A) from (3R)-3-hydroxytetradecanoyl-[acyl-carrier-protein] and UDP-N-acetyl-alpha-D-glucosamine: step 2/6. Its function is as follows. Catalyzes the hydrolysis of UDP-3-O-myristoyl-N-acetylglucosamine to form UDP-3-O-myristoylglucosamine and acetate, the committed step in lipid A biosynthesis. This is UDP-3-O-acyl-N-acetylglucosamine deacetylase from Neisseria meningitidis serogroup C (strain 053442).